Consider the following 233-residue polypeptide: Biosynthetic peptidoglycan transglycosylase (233 aa).

Residues 4–24 traverse the membrane as a helical segment; sequence LAYLAGCLIVGVVAMQVYFFL.

This sequence belongs to the glycosyltransferase 51 family.

It is found in the cell inner membrane. The enzyme catalyses [GlcNAc-(1-&gt;4)-Mur2Ac(oyl-L-Ala-gamma-D-Glu-L-Lys-D-Ala-D-Ala)](n)-di-trans,octa-cis-undecaprenyl diphosphate + beta-D-GlcNAc-(1-&gt;4)-Mur2Ac(oyl-L-Ala-gamma-D-Glu-L-Lys-D-Ala-D-Ala)-di-trans,octa-cis-undecaprenyl diphosphate = [GlcNAc-(1-&gt;4)-Mur2Ac(oyl-L-Ala-gamma-D-Glu-L-Lys-D-Ala-D-Ala)](n+1)-di-trans,octa-cis-undecaprenyl diphosphate + di-trans,octa-cis-undecaprenyl diphosphate + H(+). It participates in cell wall biogenesis; peptidoglycan biosynthesis. Its function is as follows. Peptidoglycan polymerase that catalyzes glycan chain elongation from lipid-linked precursors. The chain is Biosynthetic peptidoglycan transglycosylase from Cupriavidus metallidurans (strain ATCC 43123 / DSM 2839 / NBRC 102507 / CH34) (Ralstonia metallidurans).